The following is a 178-amino-acid chain: ATP-dependent protease subunit HslV (178 aa).

The active site involves T7. Na(+) is bound by residues G162, C165, and T168.

This sequence belongs to the peptidase T1B family. HslV subfamily. As to quaternary structure, a double ring-shaped homohexamer of HslV is capped on each side by a ring-shaped HslU homohexamer. The assembly of the HslU/HslV complex is dependent on binding of ATP.

The protein localises to the cytoplasm. The catalysed reaction is ATP-dependent cleavage of peptide bonds with broad specificity.. With respect to regulation, allosterically activated by HslU binding. In terms of biological role, protease subunit of a proteasome-like degradation complex believed to be a general protein degrading machinery. This is ATP-dependent protease subunit HslV from Cupriavidus taiwanensis (strain DSM 17343 / BCRC 17206 / CCUG 44338 / CIP 107171 / LMG 19424 / R1) (Ralstonia taiwanensis (strain LMG 19424)).